We begin with the raw amino-acid sequence, 351 residues long: Transmembrane protein 185-like (351 aa).

A run of 8 helical transmembrane segments spans residues 16 to 36 (LIYACLLLFSVLLSLRLDGII), 41 to 61 (WAVFAPIWLWKLMVIIGASVG), 81 to 101 (FKAMLIAVGIHLLLLTFEVLV), 113 to 133 (WLLVFMPLFFVSPVSVAACVW), 154 to 174 (FIFIALKLDGIISWPWLVVCV), 178 to 198 (ILMSFLCLVVLYYIVWSVLFL), 212 to 232 (ITMAISWMTIVVPLLTFEILL), and 244 to 264 (YVPVFVPLWVSLVTLMVTTFG).

It belongs to the TMEM185 family.

The protein localises to the membrane. The chain is Transmembrane protein 185-like from Danio rerio (Zebrafish).